The primary structure comprises 739 residues: Catalase-peroxidase (739 aa).

Positions 99-227 form a cross-link, tryptophyl-tyrosyl-methioninium (Trp-Tyr) (with M-253); it reads WHSAGTYRMG…LAAVQMGLIY (129 aa). The Proton acceptor role is filled by His100. Positions 227-253 form a cross-link, tryptophyl-tyrosyl-methioninium (Tyr-Met) (with W-99); sequence YVNPEGPDGNPDPVASGRDVRETFARM. His268 serves as a coordination point for heme b.

Belongs to the peroxidase family. Peroxidase/catalase subfamily. In terms of assembly, homodimer or homotetramer. Requires heme b as cofactor. Post-translationally, formation of the three residue Trp-Tyr-Met cross-link is important for the catalase, but not the peroxidase activity of the enzyme.

The enzyme catalyses H2O2 + AH2 = A + 2 H2O. It carries out the reaction 2 H2O2 = O2 + 2 H2O. Functionally, bifunctional enzyme with both catalase and broad-spectrum peroxidase activity. The chain is Catalase-peroxidase from Syntrophotalea carbinolica (strain DSM 2380 / NBRC 103641 / GraBd1) (Pelobacter carbinolicus).